The chain runs to 113 residues: Ribonuclease P protein component (113 aa).

This sequence belongs to the RnpA family. In terms of assembly, consists of a catalytic RNA component (M1 or rnpB) and a protein subunit.

It catalyses the reaction Endonucleolytic cleavage of RNA, removing 5'-extranucleotides from tRNA precursor.. Functionally, RNaseP catalyzes the removal of the 5'-leader sequence from pre-tRNA to produce the mature 5'-terminus. It can also cleave other RNA substrates such as 4.5S RNA. The protein component plays an auxiliary but essential role in vivo by binding to the 5'-leader sequence and broadening the substrate specificity of the ribozyme. This is Ribonuclease P protein component from Desulforamulus reducens (strain ATCC BAA-1160 / DSM 100696 / MI-1) (Desulfotomaculum reducens).